The sequence spans 440 residues: MVQFFQPKPKALPTQAVEITIDNLDHHLTGVGRYQGKACFVEGVLPGEKVSVQITEQKKQYAHARLRQVIEPSADRCEPFCPAFKQCGGCNAQMMPQAMQCQAKQQGVQRLFRQLAKIDLPAPLWIESSAPQAYRRVCRLAVKYDKNKRCVLVGFRQKQSQALVEINSCPVLTAALSALIVPLRTLINELSSARDVGHIELYETESGLAMLLRHNGRPPVKDKELLLAFALQHDCALYLQTTGYPEPLADVKPSFYQLDGLRLYFQPGDFLQVNPQVNQRLVNYVREWLAPTATDNVLDLFCGIGNFTLPLAREAASVTGIEGVDEMVQRATHNAEQNQLVNTGFHRADLTKMAEYANAGWQQQCYDLVLLDPGRTGAEAVMPWLAKSGARRIVYVSCNPVTAARDCALLQPGYTLKQWGLLDMFPHTGHVESLFLFERK.

Positions 10 to 68 (KALPTQAVEITIDNLDHHLTGVGRYQGKACFVEGVLPGEKVSVQITEQKKQYAHARLRQ) constitute a TRAM domain. [4Fe-4S] cluster-binding residues include C81, C87, C90, and C169. Positions 272, 301, 306, 322, 349, and 372 each coordinate S-adenosyl-L-methionine. The active-site Nucleophile is the C398.

It belongs to the class I-like SAM-binding methyltransferase superfamily. RNA M5U methyltransferase family. RlmD subfamily.

The catalysed reaction is uridine(1939) in 23S rRNA + S-adenosyl-L-methionine = 5-methyluridine(1939) in 23S rRNA + S-adenosyl-L-homocysteine + H(+). Functionally, catalyzes the formation of 5-methyl-uridine at position 1939 (m5U1939) in 23S rRNA. The protein is 23S rRNA (uracil(1939)-C(5))-methyltransferase RlmD of Tolumonas auensis (strain DSM 9187 / NBRC 110442 / TA 4).